A 224-amino-acid chain; its full sequence is Probable amino-acid permease protein YxeN (224 aa).

Helical transmembrane passes span 3 to 23, 24 to 44, 58 to 78, 91 to 111, 157 to 177, and 190 to 210; these read TIDWEFMISAFPTLIQALPIT, LFMAIAAMIFAIIGGLILALI, LYISFFRGVPTLVQLFLIYYG, ALTAAIIGLSLKNAAYLAEIF, FIGLLKETSLAFTLGVMEMFA, and FETYLAVAIVYWVLTIIYSIL. The ABC transmembrane type-1 domain maps to 20–211; sequence LPITLFMAIA…VLTIIYSILQ (192 aa).

The protein belongs to the binding-protein-dependent transport system permease family. In terms of assembly, the complex is composed of two ATP-binding proteins (YxeO), two transmembrane proteins (YxeN) and a solute-binding protein (YxeM).

Its subcellular location is the cell membrane. Its function is as follows. Probably part of the ABC transporter complex YxeMNO that could be involved in amino-acid import. May transport S-methylcysteine. Probably responsible for the translocation of the substrate across the membrane. The polypeptide is Probable amino-acid permease protein YxeN (yxeN) (Bacillus subtilis (strain 168)).